Consider the following 92-residue polypeptide: Small cysteine and glycine repeat-containing protein 9 (92 aa).

Residues 4-72 form an 11 X 2 AA repeats of CG region; sequence CGCGSCGCSG…CCRRTCSSCG (69 aa).

The protein belongs to the KRTAP type 28 family.

Functionally, in the hair cortex, hair keratin intermediate filaments are embedded in an interfilamentous matrix, consisting of hair keratin-associated proteins (KRTAP), which are essential for the formation of a rigid and resistant hair shaft through their extensive disulfide bond cross-linking with abundant cysteine residues of hair keratins. The matrix proteins include the high-sulfur and high-glycine-tyrosine keratins. The protein is Small cysteine and glycine repeat-containing protein 9 of Homo sapiens (Human).